Reading from the N-terminus, the 353-residue chain is Chorismate synthase (353 aa).

The NADP(+) site is built by Arg48 and Arg54. Residues 125–127 (RSS), 238–239 (NA), Gly278, 293–297 (KPTSS), and Arg319 each bind FMN.

It belongs to the chorismate synthase family. In terms of assembly, homotetramer. The cofactor is FMNH2.

The enzyme catalyses 5-O-(1-carboxyvinyl)-3-phosphoshikimate = chorismate + phosphate. Its pathway is metabolic intermediate biosynthesis; chorismate biosynthesis; chorismate from D-erythrose 4-phosphate and phosphoenolpyruvate: step 7/7. Functionally, catalyzes the anti-1,4-elimination of the C-3 phosphate and the C-6 proR hydrogen from 5-enolpyruvylshikimate-3-phosphate (EPSP) to yield chorismate, which is the branch point compound that serves as the starting substrate for the three terminal pathways of aromatic amino acid biosynthesis. This reaction introduces a second double bond into the aromatic ring system. This chain is Chorismate synthase, found in Buchnera aphidicola subsp. Schizaphis graminum (strain Sg).